We begin with the raw amino-acid sequence, 477 residues long: Phosphatidylinositol 4-kinase type 2-beta (477 aa).

The disordered stretch occupies residues 1–80 (MPEPPRDIMA…EDRSISASLS (80 aa)). Serine 45 is modified (phosphoserine). The PI3K/PI4K catalytic domain maps to 116-447 (GVFPERISQG…AQMPCVIVEC (332 aa)). Positions 122-128 (ISQGSSG) are G-loop. The ATP site is built by serine 129 and lysine 144. The important for substrate binding stretch occupies residues 149-151 (EPY). Residues 157–170 (KWTKYVHKVCCPCC) form an important for interaction with membranes region. ATP-binding positions include 253 to 256 (QLFV) and 267 to 268 (RR). The important for interaction with membranes stretch occupies residues 260-268 (KEAEYWLRR). Residues 297-305 (RNTDRGNDN) form a catalytic loop region. An activation loop region spans residues 338–358 (AIDNGLAFPFKHPDEWRAYPF). Position 340 (aspartate 340) interacts with ATP. An important for interaction with membranes region spans residues 353–362 (WRAYPFHWAW).

The protein belongs to the PI3/PI4-kinase family. Type II PI4K subfamily.

The protein localises to the cytoplasm. The protein resides in the cytosol. It is found in the golgi apparatus membrane. Its subcellular location is the endoplasmic reticulum membrane. It localises to the cell membrane. The protein localises to the early endosome membrane. The enzyme catalyses a 1,2-diacyl-sn-glycero-3-phospho-(1D-myo-inositol) + ATP = a 1,2-diacyl-sn-glycero-3-phospho-(1D-myo-inositol 4-phosphate) + ADP + H(+). Together with PI4K2A and the type III PI4Ks (PIK4CA and PIK4CB) it contributes to the overall PI4-kinase activity of the cell. This contribution may be especially significant in plasma membrane, endosomal and Golgi compartments. The phosphorylation of phosphatidylinositol (PI) to PI4P is the first committed step in the generation of phosphatidylinositol 4,5-bisphosphate (PIP2), a precursor of the second messenger inositol 1,4,5-trisphosphate (InsP3). Contributes to the production of InsP3 in stimulated cells and is likely to be involved in the regulation of vesicular trafficking. The protein is Phosphatidylinositol 4-kinase type 2-beta (Pi4k2b) of Rattus norvegicus (Rat).